The following is a 70-amino-acid chain: ATP synthase subunit c (70 aa).

Transmembrane regions (helical) follow at residues 3 to 23 and 44 to 64; these read ALAA…IGIA and LFLI…VIAF.

It belongs to the ATPase C chain family. F-type ATPases have 2 components, F(1) - the catalytic core - and F(0) - the membrane proton channel. F(1) has five subunits: alpha(3), beta(3), gamma(1), delta(1), epsilon(1). F(0) has three main subunits: a(1), b(2) and c(10-14). The alpha and beta chains form an alternating ring which encloses part of the gamma chain. F(1) is attached to F(0) by a central stalk formed by the gamma and epsilon chains, while a peripheral stalk is formed by the delta and b chains.

The protein resides in the cell membrane. F(1)F(0) ATP synthase produces ATP from ADP in the presence of a proton or sodium gradient. F-type ATPases consist of two structural domains, F(1) containing the extramembraneous catalytic core and F(0) containing the membrane proton channel, linked together by a central stalk and a peripheral stalk. During catalysis, ATP synthesis in the catalytic domain of F(1) is coupled via a rotary mechanism of the central stalk subunits to proton translocation. Its function is as follows. Key component of the F(0) channel; it plays a direct role in translocation across the membrane. A homomeric c-ring of between 10-14 subunits forms the central stalk rotor element with the F(1) delta and epsilon subunits. The chain is ATP synthase subunit c from Caldicellulosiruptor bescii (strain ATCC BAA-1888 / DSM 6725 / KCTC 15123 / Z-1320) (Anaerocellum thermophilum).